Consider the following 354-residue polypeptide: Ferrochelatase (354 aa).

Fe cation-binding residues include histidine 214 and glutamate 295.

It belongs to the ferrochelatase family.

The protein resides in the cytoplasm. The catalysed reaction is heme b + 2 H(+) = protoporphyrin IX + Fe(2+). It participates in porphyrin-containing compound metabolism; protoheme biosynthesis; protoheme from protoporphyrin-IX: step 1/1. Its function is as follows. Catalyzes the ferrous insertion into protoporphyrin IX. The polypeptide is Ferrochelatase (Burkholderia ambifaria (strain MC40-6)).